A 437-amino-acid polypeptide reads, in one-letter code: C-terminal-binding protein 2 (437 aa).

Residues Ser-103, 183–188, Asp-207, 240–246, 267–269, and Asp-293 contribute to the NAD(+) site; these read IGLGRI, CNLNEHN, and TAR. Arg-269 is a catalytic residue. The active site involves Glu-298. The active-site Proton donor is His-318. Position 318 to 321 (318 to 321) interacts with NAD(+); the sequence is HTAW. Positions 410–437 are disordered; that stretch reads PLIPSVSHTPSPGQTTKPDPDREIPTDQ. The segment covering 415–426 has biased composition (polar residues); the sequence is VSHTPSPGQTTK. The segment covering 427-437 has biased composition (basic and acidic residues); it reads PDPDREIPTDQ.

Belongs to the D-isomer specific 2-hydroxyacid dehydrogenase family. As to quaternary structure, interacts with the C-terminus of tcf7l1-a via the consensus motifs P-X-[DNS]-L-[STVA].

Its subcellular location is the nucleus. In terms of biological role, corepressor targeting diverse transcription regulators. The polypeptide is C-terminal-binding protein 2 (ctbp2) (Xenopus laevis (African clawed frog)).